The following is a 501-amino-acid chain: ATP synthase subunit alpha (501 aa).

Position 169–176 (169–176) interacts with ATP; the sequence is GDRQTGKT.

This sequence belongs to the ATPase alpha/beta chains family. In terms of assembly, F-type ATPases have 2 components, CF(1) - the catalytic core - and CF(0) - the membrane proton channel. CF(1) has five subunits: alpha(3), beta(3), gamma(1), delta(1), epsilon(1). CF(0) has three main subunits: a(1), b(2) and c(9-12). The alpha and beta chains form an alternating ring which encloses part of the gamma chain. CF(1) is attached to CF(0) by a central stalk formed by the gamma and epsilon chains, while a peripheral stalk is formed by the delta and b chains.

It is found in the cell membrane. The enzyme catalyses ATP + H2O + 4 H(+)(in) = ADP + phosphate + 5 H(+)(out). Functionally, produces ATP from ADP in the presence of a proton gradient across the membrane. The alpha chain is a regulatory subunit. The protein is ATP synthase subunit alpha of Streptococcus pneumoniae (strain Hungary19A-6).